Reading from the N-terminus, the 81-residue chain is uncharacterized protein (81 aa).

The first 16 residues, 1–16 (MNRLTFYGLCLSGAVG), serve as a signal peptide directing secretion. The disordered stretch occupies residues 55–81 (TIDPHHNHHDDHHDSHGHGHGKIKGHH). The segment covering 57 to 71 (DPHHNHHDDHHDSHG) has biased composition (basic and acidic residues). The span at 72-81 (HGHGKIKGHH) shows a compositional bias: basic residues.

It is found in the secreted. This is an uncharacterized protein from Dictyostelium discoideum (Social amoeba).